Here is a 128-residue protein sequence, read N- to C-terminus: Cytochrome c oxidase subunit 5B, mitochondrial (128 aa).

The transit peptide at 1–30 (MASRLLRGVGALAAQALRRTARGAAVTRSM) directs the protein to the mitochondrion. An N6-acetyllysine mark is found at K67 and K85. The Zn(2+) site is built by C90, C92, C112, and C115. K120 carries the post-translational modification N6-acetyllysine.

Belongs to the cytochrome c oxidase subunit 5B family. In terms of assembly, component of the cytochrome c oxidase (complex IV, CIV), a multisubunit enzyme composed of 14 subunits. The complex is composed of a catalytic core of 3 subunits MT-CO1, MT-CO2 and MT-CO3, encoded in the mitochondrial DNA, and 11 supernumerary subunits COX4I, COX5A, COX5B, COX6A, COX6B, COX6C, COX7A, COX7B, COX7C, COX8 and NDUFA4, which are encoded in the nuclear genome. The complex exists as a monomer or a dimer and forms supercomplexes (SCs) in the inner mitochondrial membrane with NADH-ubiquinone oxidoreductase (complex I, CI) and ubiquinol-cytochrome c oxidoreductase (cytochrome b-c1 complex, complex III, CIII), resulting in different assemblies (supercomplex SCI(1)III(2)IV(1) and megacomplex MCI(2)III(2)IV(2)).

The protein resides in the mitochondrion inner membrane. It participates in energy metabolism; oxidative phosphorylation. Component of the cytochrome c oxidase, the last enzyme in the mitochondrial electron transport chain which drives oxidative phosphorylation. The respiratory chain contains 3 multisubunit complexes succinate dehydrogenase (complex II, CII), ubiquinol-cytochrome c oxidoreductase (cytochrome b-c1 complex, complex III, CIII) and cytochrome c oxidase (complex IV, CIV), that cooperate to transfer electrons derived from NADH and succinate to molecular oxygen, creating an electrochemical gradient over the inner membrane that drives transmembrane transport and the ATP synthase. Cytochrome c oxidase is the component of the respiratory chain that catalyzes the reduction of oxygen to water. Electrons originating from reduced cytochrome c in the intermembrane space (IMS) are transferred via the dinuclear copper A center (CU(A)) of subunit 2 and heme A of subunit 1 to the active site in subunit 1, a binuclear center (BNC) formed by heme A3 and copper B (CU(B)). The BNC reduces molecular oxygen to 2 water molecules using 4 electrons from cytochrome c in the IMS and 4 protons from the mitochondrial matrix. The polypeptide is Cytochrome c oxidase subunit 5B, mitochondrial (Cox5b) (Mus musculus (Mouse)).